The chain runs to 413 residues: CinA-like protein (413 aa).

It belongs to the CinA family.

The protein is CinA-like protein of Geobacter metallireducens (strain ATCC 53774 / DSM 7210 / GS-15).